The sequence spans 336 residues: 4-hydroxythreonine-4-phosphate dehydrogenase (336 aa).

The substrate site is built by His-135 and Thr-136. The a divalent metal cation site is built by His-165, His-210, and His-265. 3 residues coordinate substrate: Lys-273, Asn-282, and Arg-291.

Belongs to the PdxA family. Homodimer. Requires Zn(2+) as cofactor. Mg(2+) is required as a cofactor. The cofactor is Co(2+).

Its subcellular location is the cytoplasm. It carries out the reaction 4-(phosphooxy)-L-threonine + NAD(+) = 3-amino-2-oxopropyl phosphate + CO2 + NADH. Its pathway is cofactor biosynthesis; pyridoxine 5'-phosphate biosynthesis; pyridoxine 5'-phosphate from D-erythrose 4-phosphate: step 4/5. Functionally, catalyzes the NAD(P)-dependent oxidation of 4-(phosphooxy)-L-threonine (HTP) into 2-amino-3-oxo-4-(phosphooxy)butyric acid which spontaneously decarboxylates to form 3-amino-2-oxopropyl phosphate (AHAP). This is 4-hydroxythreonine-4-phosphate dehydrogenase from Marinobacter nauticus (strain ATCC 700491 / DSM 11845 / VT8) (Marinobacter aquaeolei).